A 266-amino-acid polypeptide reads, in one-letter code: 4-hydroxy-tetrahydrodipicolinate reductase (266 aa).

10-15 lines the NAD(+) pocket; it reads GPRGRM. Lys38 provides a ligand contact to NADP(+). NAD(+) contacts are provided by residues 99 to 101 and 125 to 128; these read GTT and APNF. His155 (proton donor/acceptor) is an active-site residue. His156 is a binding site for (S)-2,3,4,5-tetrahydrodipicolinate. The Proton donor role is filled by Lys159. 165-166 contributes to the (S)-2,3,4,5-tetrahydrodipicolinate binding site; it reads GT.

It belongs to the DapB family.

The protein resides in the cytoplasm. It catalyses the reaction (S)-2,3,4,5-tetrahydrodipicolinate + NAD(+) + H2O = (2S,4S)-4-hydroxy-2,3,4,5-tetrahydrodipicolinate + NADH + H(+). It carries out the reaction (S)-2,3,4,5-tetrahydrodipicolinate + NADP(+) + H2O = (2S,4S)-4-hydroxy-2,3,4,5-tetrahydrodipicolinate + NADPH + H(+). Its pathway is amino-acid biosynthesis; L-lysine biosynthesis via DAP pathway; (S)-tetrahydrodipicolinate from L-aspartate: step 4/4. Its function is as follows. Catalyzes the conversion of 4-hydroxy-tetrahydrodipicolinate (HTPA) to tetrahydrodipicolinate. The sequence is that of 4-hydroxy-tetrahydrodipicolinate reductase from Bacillus cereus (strain ZK / E33L).